We begin with the raw amino-acid sequence, 707 residues long: GDNF-inducible zinc finger protein 1 (707 aa).

The 73-residue stretch at 31 to 103 folds into the BTB domain; the sequence is CDVTVIVDYQ…VYTARVRVKE (73 aa). Over residues 149-165 the composition is skewed to polar residues; that stretch reads VEASSGPQVSVTPSSKA. 2 disordered regions span residues 149–221 and 243–309; these read VEAS…PKIR and RRLR…KDGE. Composition is skewed to basic and acidic residues over residues 198–213, 243–278, and 287–298; these read PSKK…KDVA, RRLR…EPAS, and VEREESLQKVEG. 10 consecutive C2H2-type zinc fingers follow at residues 316–338, 347–370, 376–399, 406–428, 434–456, 462–484, 490–512, 518–540, 546–568, and 574–596; these read FQCT…IKYH, YRCD…RHVH, FPCE…LQVH, HRCG…ERTH, YGCT…LRVH, FVCD…KRCH, FMCE…NRIH, FKCE…IKVH, YCCD…HRIH, and YMCN…TSIH. A Phosphoserine modification is found at serine 612.

It belongs to the krueppel C2H2-type zinc-finger protein family. Interacts with NCL.

The protein localises to the cytoplasm. The protein resides in the nucleus. Its subcellular location is the nucleoplasm. It localises to the nucleolus. Functionally, transcriptional repressor that binds the GZF1 responsive element (GRE) (consensus: 5'-TGCGCN[TG][CA]TATA-3'). May be regulating VSX2/HOX10 expression. The sequence is that of GDNF-inducible zinc finger protein 1 (Gzf1) from Rattus norvegicus (Rat).